The chain runs to 1481 residues: Cystic fibrosis transmembrane conductance regulator (1481 aa).

Topologically, residues 1–77 are cytoplasmic; the sequence is MQRSPLEKAS…KLINALRRCF (77 aa). Residues 78–98 traverse the membrane as a helical segment; the sequence is FWRFMFYGIILYLGEVTKAVQ. Residues 81–365 form the ABC transmembrane type-1 1 domain; that stretch reads FMFYGIILYL…WAVQTWYDSL (285 aa). Residues 99-122 are Extracellular-facing; the sequence is PLLLGRIIASYDPDNKVERSIAIY. The helical transmembrane segment at 123 to 146 threads the bilayer; the sequence is LGIGLCLLFIVRTLLLHPAIFGLH. At 147–195 the chain is on the cytoplasmic side; the sequence is HIGMQMRIAMFSLIYKKTLKLSSRVLDKISIGQLVSLLSNNLNKFDEGL. Residues 196–216 form a helical membrane-spanning segment; the sequence is ALAHFVWIAPLQVTLLMGLLW. At 217–222 the chain is on the extracellular side; that stretch reads ELLQAF. A helical transmembrane segment spans residues 223-243; the sequence is TFCGLAFLVVLAFLQAGLGKM. The Cytoplasmic segment spans residues 244-298; the sequence is MMKYRDQRAGKINERLVITSEIIENIQSVKAYCWEEAMEKIIENLRQTELKLTRK. The helical transmembrane segment at 299–319 threads the bilayer; that stretch reads AAYVRYLNSSAFFFSGFFVVF. Residues 320–339 are Extracellular-facing; it reads LSVLPYALLKGIILRKIFTT. Residues 340–358 traverse the membrane as a helical segment; sequence ISFCIVLRMAVTRQFPWAV. Over 359–858 the chain is Cytoplasmic; the sequence is QTWYDSLGAI…YLRYITVHKS (500 aa). ATP-binding positions include tryptophan 401, 457–464, and glutamine 492; that span reads GSTGAGKT. The ABC transporter 1 domain occupies 423-645; it reads NGDNNLFFSN…RPDFSSKLMG (223 aa). A lipid anchor (S-palmitoyl cysteine) is attached at cysteine 523. Serine 548 and serine 659 each carry phosphoserine. The interval 653–831 is disordered R region; sequence TAERRNSIIT…EEINEEDLRD (179 aa). Serine 669 bears the Phosphoserine; by PKA mark. At serine 685 the chain carries Phosphoserine. Lysine 687 participates in a covalent cross-link: Glycyl lysine isopeptide (Lys-Gly) (interchain with G-Cter in ubiquitin). 2 positions are modified to phosphoserine: serine 699 and serine 711. Threonine 716 carries the post-translational modification Phosphothreonine. Phosphoserine occurs at positions 736, 767, 790, 795, and 813. The chain crosses the membrane as a helical span at residues 859-879; the sequence is LMFVLIWCLVVFLAEVAASLV. In terms of domain architecture, ABC transmembrane type-1 2 spans 859–1155; the sequence is LMFVLIWCLV…AVNSSIDVDS (297 aa). Residues 880–918 lie on the Extracellular side of the membrane; it reads VLCLFPKILFQDKGNSTKSANNSYAVIITSTSSYYIFYI. Asparagine 894 and asparagine 900 each carry an N-linked (GlcNAc...) asparagine glycan. A discontinuously helical membrane pass occupies residues 919–939; it reads YVGVADTLLALGLFRGLPLVH. The Cytoplasmic portion of the chain corresponds to 940–990; sequence TLITVSKTLHHKMLQSVLQAPMSTLNTLKTGGILNRFSKDIAVLDDLLPLT. The helical transmembrane segment at 991-1011 threads the bilayer; that stretch reads IFDFVQLLLIVIGAVVVVSVL. Residues 1012 to 1013 are Extracellular-facing; that stretch reads QP. Residues 1014–1034 form a helical membrane-spanning segment; the sequence is YIFLATVPVIAAFILLRAYFL. Residues 1035–1095 lie on the Cytoplasmic side of the membrane; it reads HTSQQLKQLE…TANWFLYLST (61 aa). A helical membrane pass occupies residues 1096 to 1116; it reads LRWFQMRIEMIFVIFFIAVTF. The Extracellular portion of the chain corresponds to 1117-1130; the sequence is ISILTTGEGEGRVG. A helical transmembrane segment spans residues 1131 to 1151; it reads IILTLAMNIMGTLQWAVNSSI. Residues 1152–1481 are Cytoplasmic-facing; that stretch reads DVDSLMRSVS…TEEEVQETKL (330 aa). The region spanning 1211–1444 is the ABC transporter 2 domain; it reads MTVKDLTAKY…KSLFRQAISP (234 aa). ATP contacts are provided by residues tyrosine 1220 and 1245 to 1252; that span reads GRTGSGKS. An interaction with GORASP2 region spans residues 1387–1481; that stretch reads RTLKQAFADC…TEEEVQETKL (95 aa). Residue cysteine 1396 is the site of S-palmitoyl cysteine attachment. Positions 1452 to 1481 are disordered; sequence PQRNSSRQKSRSNIAALKEETEEEVQETKL. Residues 1453–1464 are compositionally biased toward low complexity; the sequence is QRNSSRQKSRSN. Position 1457 is a phosphoserine (serine 1457). The span at 1471–1481 shows a compositional bias: acidic residues; the sequence is ETEEEVQETKL. Residues 1479 to 1481 carry the PDZ-binding motif; it reads TKL.

Belongs to the ABC transporter superfamily. ABCC family. CFTR transporter (TC 3.A.1.202) subfamily. As to quaternary structure, monomer; does not require oligomerization for channel activity. May form oligomers in the membrane. Interacts with SLC26A3, SLC26A6 and NHERF1. Interacts with SHANK2. Interacts with MYO6. Interacts (via C-terminus) with GOPC (via PDZ domain); this promotes CFTR internalization and thereby decreases channel activity. Interacts with SLC4A7 through NHERF1. Found in a complex with MYO5B and RAB11A. Interacts with ANO1. Interacts with SLC26A8. Interacts with AHCYL1; the interaction increases CFTR activity. Interacts with CSE1L. The core-glycosylated form interacts with GORASP2 (via PDZ GRASP-type 1 domain) in respone to ER stress. Interacts with MARCHF2; the interaction leads to CFTR ubiqtuitination and degradation. Interacts with ADGRG2. Post-translationally, N-glycosylated. In terms of processing, phosphorylated; cAMP treatment promotes phosphorylation and activates the channel. Dephosphorylation decreases the ATPase activity (in vitro). Phosphorylation at PKA sites activates the channel. Phosphorylation at PKC sites enhances the response to phosphorylation by PKA. Phosphorylated by AMPK; this inhibits channel activity. Ubiquitinated, leading to its degradation in the lysosome. Deubiquitination by USP10 in early endosomes enhances its endocytic recycling to the cell membrane. Ubiquitinated by RNF185 during ER stress. Ubiquitinated by MARCHF2.

The protein localises to the apical cell membrane. It localises to the early endosome membrane. The protein resides in the cell membrane. Its subcellular location is the recycling endosome membrane. It is found in the endoplasmic reticulum membrane. The protein localises to the nucleus. It carries out the reaction ATP + H2O + closed Cl(-) channel = ADP + phosphate + open Cl(-) channel.. The enzyme catalyses chloride(in) = chloride(out). The catalysed reaction is hydrogencarbonate(in) = hydrogencarbonate(out). It catalyses the reaction ATP + H2O = ADP + phosphate + H(+). Epithelial ion channel that plays an important role in the regulation of epithelial ion and water transport and fluid homeostasis. Mediates the transport of chloride ions across the cell membrane. Possesses an intrinsic ATPase activity and utilizes ATP to gate its channel; the passive flow of anions through the channel is gated by cycles of ATP binding and hydrolysis by the ATP-binding domains. The ion channel is also permeable to HCO(3)(-); selectivity depends on the extracellular chloride concentration. Exerts its function also by modulating the activity of other ion channels and transporters. Contributes to the regulation of the pH and the ion content of the epithelial fluid layer. Modulates the activity of the epithelial sodium channel (ENaC) complex, in part by regulating the cell surface expression of the ENaC complex. May regulate bicarbonate secretion and salvage in epithelial cells by regulating the transporter SLC4A7. Can inhibit the chloride channel activity of ANO1. Plays a role in the chloride and bicarbonate homeostasis during sperm epididymal maturation and capacitation. This Muntiacus muntjak (Barking deer) protein is Cystic fibrosis transmembrane conductance regulator.